The sequence spans 205 residues: Small ribosomal subunit protein uS4 (205 aa).

Residues 20–46 (WGRSKSPVNRREYGPGQHGQRRKGKLS) are disordered. The S4 RNA-binding domain maps to 94–157 (RRLDAVVYRA…RQLTLVLEAS (64 aa)).

This sequence belongs to the universal ribosomal protein uS4 family. Part of the 30S ribosomal subunit. Contacts protein S5. The interaction surface between S4 and S5 is involved in control of translational fidelity.

Its function is as follows. One of the primary rRNA binding proteins, it binds directly to 16S rRNA where it nucleates assembly of the body of the 30S subunit. With S5 and S12 plays an important role in translational accuracy. The protein is Small ribosomal subunit protein uS4 of Beijerinckia indica subsp. indica (strain ATCC 9039 / DSM 1715 / NCIMB 8712).